The chain runs to 338 residues: Heat-inducible transcription repressor HrcA (338 aa).

It belongs to the HrcA family.

Negative regulator of class I heat shock genes (grpE-dnaK-dnaJ and groELS operons). Prevents heat-shock induction of these operons. The protein is Heat-inducible transcription repressor HrcA of Streptomyces avermitilis (strain ATCC 31267 / DSM 46492 / JCM 5070 / NBRC 14893 / NCIMB 12804 / NRRL 8165 / MA-4680).